We begin with the raw amino-acid sequence, 401 residues long: Chromatin modification-related protein EAF3 (401 aa).

The Tudor-knot domain occupies 13 to 98; sequence RCLAFHGPLM…DEWVGYDRIR (86 aa). A compositionally biased stretch (polar residues) spans 39 to 53; it reads TSIPNDKPGGSSQAT. 2 disordered regions span residues 39–65 and 117–210; these read TSIP…GEDE and EAKK…NMLH. 2 stretches are compositionally biased toward basic and acidic residues: residues 54 to 63 and 117 to 126; these read KEIKPQKLGE and EAKKSLLEQQ. Low complexity predominate over residues 153–190; that stretch reads SISKSTSQSFLTSSVSGRKSGRSSANSLHPGSSLRSSS. The residue at position 201 (Ser201) is a Phosphoserine. An MRG domain is found at 216–399; that stretch reads PTPKISLQIP…TSSQYEGVAL (184 aa).

It belongs to the MRG family. In terms of assembly, component of the NuA4 histone acetyltransferase complex composed of at least ACT1, ARP4, YAF9, VID21, SWC4, EAF3, EAF5, EAF6, EAF7, EPL1, ESA1, TRA1 and YNG2.

The protein resides in the nucleus. In terms of biological role, component of the NuA4 histone acetyltransferase complex which is involved in transcriptional activation of selected genes principally by acetylation of nucleosomal histone H4 and H2A. The NuA4 complex is also involved in DNA repair. The polypeptide is Chromatin modification-related protein EAF3 (EAF3) (Saccharomyces cerevisiae (strain ATCC 204508 / S288c) (Baker's yeast)).